A 399-amino-acid polypeptide reads, in one-letter code: Odorant receptor 42b (399 aa).

The Cytoplasmic portion of the chain corresponds to 1 to 45 (MVFELIRPAPLTEQKRSRDGCIYLYRAMKFIGWLPPKQGVLRYVY). A helical membrane pass occupies residues 46 to 66 (LTWTLMTFVWCTTYLPLGFLG). Over 67–83 (SYMTQIKSFSPGEFLTS) the chain is Extracellular. A helical membrane pass occupies residues 84–104 (LQVCINAYGSSVKVAITYSML). At 105–140 (WRLIKAKNILDQLDLRCTAMEEREKIHLVVARSNHA) the chain is on the cytoplasmic side. The helical transmembrane segment at 141-161 (FLIFTFVYCGYAGSTYLSSVL) threads the bilayer. Residues 162–178 (SGRPPWQLYNPFIDWHD) are Extracellular-facing. A helical transmembrane segment spans residues 179 to 199 (GTLKLWVASTLEYMVMSGAVL). Residues 200–268 (QDQLSDSYPL…AIIKPVIQGT (69 aa)) are Cytoplasmic-facing. The chain crosses the membrane as a helical span at residues 269–289 (IFTQFLLIGLVLGFTLINVFF). Residues 290 to 292 (FSD) lie on the Extracellular side of the membrane. The helical transmembrane segment at 293–313 (IWTGIASFMFVITILLQTFPF) threads the bilayer. Residues 314 to 356 (CYTCNLIMEDCESLTHAIFQSNWVDASRRYKTTLLYFLQNVQQ) are Cytoplasmic-facing. Residues 357 to 377 (PIVFIAGGIFQISMSSNISVA) traverse the membrane as a helical segment. Over 378-399 (KFAFSVITITKQMNIADKFKTD) the chain is Extracellular.

Belongs to the insect chemoreceptor superfamily. Heteromeric odorant receptor channel (TC 1.A.69) family. Or2a subfamily. In terms of assembly, interacts with Orco. Complexes exist early in the endomembrane system in olfactory sensory neurons (OSNs), coupling these complexes to the conserved ciliary trafficking pathway. As to expression, expressed in olfactory sensory neurons in the antenna.

The protein resides in the cell membrane. Odorant receptor which mediates acceptance or avoidance behavior, depending on its substrates. The odorant receptor repertoire encodes a large collection of odor stimuli that vary widely in identity, intensity, and duration. May form a complex with Orco to form odorant-sensing units, providing sensitive and prolonged odorant signaling and calcium permeability. Involved in the behavioral responses to ethyl acetate and pentyl acetate. In Drosophila melanogaster (Fruit fly), this protein is Odorant receptor 42b (Or42b).